The sequence spans 1106 residues: MDGKRRPGPGPGVPPKRARGGLWDEDEAYRPSQFEEELALMEEMEAERRLQEQEEEELQSALEAADGQFSPTAIDARWLRPAPPALDPQMEPLIFQQLEIDHYVAPARPLPGAPPPSQDSVPILRAFGVTNEGVSVCCHIHGFAPYFYTPAPPGFGPEHLSELQRELSAAISRDQRGGKELTGPAVLAVELCSRESMFGYHGHGPSPFLRITLALPRLMAPARRLLEQGIRLAGLGTPSFAPYEANVDFEIRFMVDTDIVGCNWLELPAGKYILRPEGKATLCQLEADVLWSDVISHPPEGEWQRIAPLRVLSFDIECAGRKGIFPEPERDPVIQICSLGLRWGEPEPFLRLALTLRPCAPILGAKVQSYEREEDLLQAWSTFIRIMDPDVITGYNIQNFDLPYLISRAQTLKVPGFPLLGRVIGLRSNIRESSFQSRQTGRRDSKVVSMVGRVQMDMLQVLLREYKLRSYTLNAVSFHFLGEQKEDVQHSIITDLQNGNDQTRRRLAVYCLKDAFLPLRLLERLMVLVNAMEMARVTGVPLGYLLSRGQQVKVVSQLLRQAMRQGLLMPVVKTEGGEDYTGATVIEPLKGYYDVPIATLDFSSLYPSIMMAHNLCYTTLLRPGAAQKLGLTEDQFIKTPTGDEFVKASVRKGLLPQILENLLSARKRAKAELAKETDPLRRQVLDGRQLALKVSANSVYGFTGAQVGRLPCLEISQSVTGFGRQMIEKTKQLVETKYTVENGYSTSAKVVYGDTDSVMCRFGVSSVAEAMALGREAADWVSGHFPSPIRLEFEKVYFPYLLISKKRYAGLLFSSRPDAHDRMDCKGLEAVRRDNCPLVANLVTASLRRLLIDRDPSGAVAHAQDVISDLLCNRIDISQLVITKELTRAAADYAGKQAHVELAERMRKRDPGSAPSLGDRVPYVIISAAKGVAAYMKSEDPLFVLEHSLPIDTQYYLEQQLAKPLLRIFEPILGEGRAEAVLLRGDHTRCKTVLTGKVGGLLAFAKRRNCCIGCRTVLSHQGAVCKFCQPRESELYQKEVSHLSALEERFSRLWTQCQRCQGSLHEDVICTSRDCPIFYMRKKVRKDLEDQERLLRRFGPPGPEAW.

The interval 1-28 (MDGKRRPGPGPGVPPKRARGGLWDEDEA) is disordered. Residues 4–19 (KRRPGPGPGVPPKRAR) carry the Nuclear localization signal motif. Arg-19 is subject to Omega-N-methylarginine. A Glycyl lysine isopeptide (Lys-Gly) (interchain with G-Cter in SUMO2) cross-link involves residue Lys-573. Zn(2+) contacts are provided by Cys-1011, Cys-1014, Cys-1025, and Cys-1028. The CysA-type zinc-finger motif lies at 1011-1028 (CIGCRTVLSHQGAVCKFC). [4Fe-4S] cluster is bound by residues Cys-1057, Cys-1060, Cys-1070, and Cys-1075. The CysB motif motif lies at 1057–1075 (CQRCQGSLHEDVICTSRDC).

Belongs to the DNA polymerase type-B family. In terms of assembly, component of the tetrameric DNA polymerase delta complex (Pol-delta4), which consists of POLD1/p125, POLD2/p50, POLD3/p66/p68 and POLD4/p12, with POLD1 bearing both DNA polymerase and 3' to 5' proofreading exonuclease activities. Within Pol-delta4, directly interacts with POLD2 and POLD4. Following genotoxic stress by DNA-damaging agents, such as ultraviolet light and methyl methanesulfonate, or by replication stress induced by treatment with hydroxyurea or aphidicolin, Pol-delta4 is converted into a trimeric form of the complex (Pol-delta3) by POLD4 degradation. Pol-delta3 is the major form at S phase replication sites and DNA damage sites. POLD1 displays different catalytic properties depending upon the complex it is found in. It exhibits higher proofreading activity and fidelity than Pol-delta4, making it particularly well suited to respond to DNA damage. Directly interacts with PCNA, as do POLD3 and POLD4; this interaction stimulates Pol-delta4 polymerase activity. As POLD2 and POLD4, directly interacts with WRNIP1; this interaction stimulates DNA polymerase delta-mediated DNA synthesis, independently of the presence of PCNA. This stimulation may be due predominantly to an increase of initiation frequency and also to increased processivity. Also observed as a dimeric complex with POLD2 (Pol-delta2). Pol-delta2 is relatively insensitive to the PCNA stimulation (2-5-fold) compared to Pol-delta4 that is stimulated by over 50-fold. Interacts with POLDIP2; this interaction is indirect and most probably mediated through POLD2-binding. Interacts with CIAO1. Interacts with POLDIP2. Interacts with RFC1. [4Fe-4S] cluster is required as a cofactor.

It localises to the nucleus. It carries out the reaction DNA(n) + a 2'-deoxyribonucleoside 5'-triphosphate = DNA(n+1) + diphosphate. With respect to regulation, regulated by alteration of quaternary structure. Exhibits burst rates of DNA synthesis are about 5 times faster in the presence of POLD4 (Pol-delta4 complex) than in its absence (Pol-delta3 complex), while the affinity of the enzyme for its DNA and dNTP substrates appears unchanged. The Pol-delta3 complex is more likely to proofread DNA synthesis because it cleaves single-stranded DNA twice as fast and transfers mismatched DNA from the polymerase to the exonuclease sites 9 times faster compared to the Pol-delta3 complex. Pol-delta3 also extends mismatched primers 3 times more slowly in the absence of POLD4. The conversion of Pol-delta4 into Pol-delta3 is induced by genotoxic stress or by replication stress leading POLD4 degradation. Stimulated in the presence of PCNA. This stimulation is further increased in the presence of KCTD13/PDIP1, most probably via direct interaction between KCTD13 and POLD2. Its function is as follows. As the catalytic component of the trimeric (Pol-delta3 complex) and tetrameric DNA polymerase delta complexes (Pol-delta4 complex), plays a crucial role in high fidelity genome replication, including in lagging strand synthesis, and repair. Exhibits both DNA polymerase and 3'- to 5'-exonuclease activities. Requires the presence of accessory proteins POLD2, POLD3 and POLD4 for full activity. Depending upon the absence (Pol-delta3) or the presence of POLD4 (Pol-delta4), displays differences in catalytic activity. Most notably, expresses higher proofreading activity in the context of Pol-delta3 compared with that of Pol-delta4. Although both Pol-delta3 and Pol-delta4 process Okazaki fragments in vitro, Pol-delta3 may be better suited to fulfill this task, exhibiting near-absence of strand displacement activity compared to Pol-delta4 and stalling on encounter with the 5'-blocking oligonucleotides. Pol-delta3 idling process may avoid the formation of a gap, while maintaining a nick that can be readily ligated. Along with DNA polymerase kappa, DNA polymerase delta carries out approximately half of nucleotide excision repair (NER) synthesis following UV irradiation. Under conditions of DNA replication stress, in the presence of POLD3 and POLD4, may catalyze the repair of broken replication forks through break-induced replication (BIR). Involved in the translesion synthesis (TLS) of templates carrying O6-methylguanine, 8oxoG or abasic sites. This is DNA polymerase delta catalytic subunit (POLD1) from Bos taurus (Bovine).